The sequence spans 72 residues: ATP synthase subunit c (72 aa).

2 helical membrane passes run 5–25 (LLAAGIAVLAGIGAGIGIGIA) and 52–72 (GLSEATAIYGLVISIILLFVV).

It belongs to the ATPase C chain family. F-type ATPases have 2 components, F(1) - the catalytic core - and F(0) - the membrane proton channel. F(1) has five subunits: alpha(3), beta(3), gamma(1), delta(1), epsilon(1). F(0) has three main subunits: a(1), b(2) and c(10-14). The alpha and beta chains form an alternating ring which encloses part of the gamma chain. F(1) is attached to F(0) by a central stalk formed by the gamma and epsilon chains, while a peripheral stalk is formed by the delta and b chains.

It localises to the cell membrane. Its function is as follows. F(1)F(0) ATP synthase produces ATP from ADP in the presence of a proton or sodium gradient. F-type ATPases consist of two structural domains, F(1) containing the extramembraneous catalytic core and F(0) containing the membrane proton channel, linked together by a central stalk and a peripheral stalk. During catalysis, ATP synthesis in the catalytic domain of F(1) is coupled via a rotary mechanism of the central stalk subunits to proton translocation. Key component of the F(0) channel; it plays a direct role in translocation across the membrane. A homomeric c-ring of between 10-14 subunits forms the central stalk rotor element with the F(1) delta and epsilon subunits. This is ATP synthase subunit c from Clostridium perfringens (strain SM101 / Type A).